The chain runs to 535 residues: MTKYIFVTGGVVSSLGKGITAASLGRLLKNRGLNVTIQKFDPYINVDPGTMSPYQHGEVFVTDDGAETDLDLGHYERFIDINLNKYSNVTTGKIYSSVLQKERRGEYLGGTVQVIPHITNEIKERVYRSGRETNADVVITEIGGTVGDIESLPFLEAIRQIKSDIGRDNVMYIHCTLIPYLKAAGEMKTKPTQHSVKELRSLGIQPNIIVVRTELPVSQDMKDKLALFCDIDTKAVIEARDADTLYAVPLSLQEQNMDQIVCDHLKLDNPAADMTDWTALVNKVRNLSKKTKIALVGKYVELQDAYISVVEALRHAGYSFDTDVEVKWVNAEHVTAENVKELVGDTDGILVPGGFGDRGVEGKIVAIQYARENKVPFLGICLGMQLASIEFARNVLGLEGANSSEINPDTPYAIIDLLPEQKDVEDLGGTLRLGLYPCKLAEETNAYNAYNEPVVYERHRHRYEFNNQFRPDMEKAGFVFSGTSPDGRLVEIIELQDHPWFVAAQFHPELVSRPNRPQPLFHDFVSASITNKESK.

The amidoligase domain stretch occupies residues 1 to 267 (MTKYIFVTGG…DQIVCDHLKL (267 aa)). Ser-13 provides a ligand contact to CTP. Ser-13 contacts UTP. 14–19 (SLGKGI) provides a ligand contact to ATP. Tyr-54 contacts L-glutamine. Position 71 (Asp-71) interacts with ATP. Positions 71 and 141 each coordinate Mg(2+). CTP-binding positions include 148–150 (DIE), 188–193 (KTKPTQ), and Lys-224. Residues 188-193 (KTKPTQ) and Lys-224 contribute to the UTP site. 240 to 242 (RDA) contacts ATP. In terms of domain architecture, Glutamine amidotransferase type-1 spans 292-534 (KIALVGKYVE…VSASITNKES (243 aa)). Gly-354 provides a ligand contact to L-glutamine. The Nucleophile; for glutamine hydrolysis role is filled by Cys-381. L-glutamine-binding positions include 382-385 (LGMQ), Glu-405, and Arg-462. Residues His-507 and Glu-509 contribute to the active site.

The protein belongs to the CTP synthase family. Homotetramer.

It carries out the reaction UTP + L-glutamine + ATP + H2O = CTP + L-glutamate + ADP + phosphate + 2 H(+). The catalysed reaction is L-glutamine + H2O = L-glutamate + NH4(+). It catalyses the reaction UTP + NH4(+) + ATP = CTP + ADP + phosphate + 2 H(+). Its pathway is pyrimidine metabolism; CTP biosynthesis via de novo pathway; CTP from UDP: step 2/2. Allosterically activated by GTP, when glutamine is the substrate; GTP has no effect on the reaction when ammonia is the substrate. The allosteric effector GTP functions by stabilizing the protein conformation that binds the tetrahedral intermediate(s) formed during glutamine hydrolysis. Inhibited by the product CTP, via allosteric rather than competitive inhibition. Its function is as follows. Catalyzes the ATP-dependent amination of UTP to CTP with either L-glutamine or ammonia as the source of nitrogen. Regulates intracellular CTP levels through interactions with the four ribonucleotide triphosphates. This Bacillus mycoides (strain KBAB4) (Bacillus weihenstephanensis) protein is CTP synthase.